The primary structure comprises 284 residues: 4-diphosphocytidyl-2-C-methyl-D-erythritol kinase (284 aa).

The active site involves Lys14. 98-108 is an ATP binding site; the sequence is PMGGGLGGGSS. Asp140 is a catalytic residue.

It belongs to the GHMP kinase family. IspE subfamily.

The catalysed reaction is 4-CDP-2-C-methyl-D-erythritol + ATP = 4-CDP-2-C-methyl-D-erythritol 2-phosphate + ADP + H(+). The protein operates within isoprenoid biosynthesis; isopentenyl diphosphate biosynthesis via DXP pathway; isopentenyl diphosphate from 1-deoxy-D-xylulose 5-phosphate: step 3/6. Functionally, catalyzes the phosphorylation of the position 2 hydroxy group of 4-diphosphocytidyl-2C-methyl-D-erythritol. The chain is 4-diphosphocytidyl-2-C-methyl-D-erythritol kinase from Shewanella baltica (strain OS223).